The primary structure comprises 209 residues: Probable nicotinate-nucleotide adenylyltransferase (209 aa).

This sequence belongs to the NadD family.

It catalyses the reaction nicotinate beta-D-ribonucleotide + ATP + H(+) = deamido-NAD(+) + diphosphate. The protein operates within cofactor biosynthesis; NAD(+) biosynthesis; deamido-NAD(+) from nicotinate D-ribonucleotide: step 1/1. Its function is as follows. Catalyzes the reversible adenylation of nicotinate mononucleotide (NaMN) to nicotinic acid adenine dinucleotide (NaAD). In Streptococcus pneumoniae serotype 4 (strain ATCC BAA-334 / TIGR4), this protein is Probable nicotinate-nucleotide adenylyltransferase.